A 130-amino-acid polypeptide reads, in one-letter code: Sulfurtransferase TusD (130 aa).

C80 serves as the catalytic Cysteine persulfide intermediate.

It belongs to the DsrE/TusD family. In terms of assembly, heterohexamer, formed by a dimer of trimers. The hexameric TusBCD complex contains 2 copies each of TusB, TusC and TusD. The TusBCD complex interacts with TusE.

It is found in the cytoplasm. Functionally, part of a sulfur-relay system required for 2-thiolation of 5-methylaminomethyl-2-thiouridine (mnm(5)s(2)U) at tRNA wobble positions. Accepts sulfur from TusA and transfers it in turn to TusE. In Sodalis glossinidius (strain morsitans), this protein is Sulfurtransferase TusD.